Reading from the N-terminus, the 150-residue chain is Myeloid-derived growth factor homolog (150 aa).

The first 22 residues, 1-22 (MTFLKYLLILCTIFLMVTNSLS), serve as a signal peptide directing secretion.

This sequence belongs to the MYDGF family.

Its subcellular location is the secreted. The chain is Myeloid-derived growth factor homolog from Dictyostelium discoideum (Social amoeba).